Reading from the N-terminus, the 96-residue chain is Co-chaperonin GroES (96 aa).

Belongs to the GroES chaperonin family. In terms of assembly, heptamer of 7 subunits arranged in a ring. Interacts with the chaperonin GroEL.

It is found in the cytoplasm. Functionally, together with the chaperonin GroEL, plays an essential role in assisting protein folding. The GroEL-GroES system forms a nano-cage that allows encapsulation of the non-native substrate proteins and provides a physical environment optimized to promote and accelerate protein folding. GroES binds to the apical surface of the GroEL ring, thereby capping the opening of the GroEL channel. This Legionella jeonii protein is Co-chaperonin GroES.